We begin with the raw amino-acid sequence, 67 residues long: MKKDIHPKYEETTVTCACGNVINTRSTVKDIKVEICSQCHPFFTGKQKLVDTAGRIDRFKKRYNIKD.

Positions 16, 18, 36, and 39 each coordinate Zn(2+).

It belongs to the bacterial ribosomal protein bL31 family. Type A subfamily. In terms of assembly, part of the 50S ribosomal subunit. Zn(2+) serves as cofactor.

In terms of biological role, binds the 23S rRNA. This Treponema denticola (strain ATCC 35405 / DSM 14222 / CIP 103919 / JCM 8153 / KCTC 15104) protein is Large ribosomal subunit protein bL31.